A 377-amino-acid chain; its full sequence is MSNGIVIIGSGFAARQLVKNIRKQDATIPLTLIAADSMDEYNKPDLSHVISQGQRADDLTRQTAGEFAEQFNLHLFPQTWVTDIDAEARVVKSQNNQWQYDKLVLATGASAFVPPVPGRELMLTLNSQQEYRACETQLRDARRVLIVGGGLIGSELAMDFCRAGKAVTLIDNAASILASLMPPEVSSRLQHRLTEMGVHLLLKSQLQGLEKTDSGILATLDRQRSIEVDAVIAATGLRPETALARRAGLTINRGVCVDSYLQTSNADIYALGDCAEINGQVLPFLQPIQLSAMVLAKNLLGNNTPLKLPAMLVKIKTPELPLHLAGETQRQDLRWQINTERQGMVARGVDDADQLRAFVVSEDRMKEAFGLLKTLPM.

Belongs to the FAD-dependent oxidoreductase family. The cofactor is FAD.

The protein resides in the cytoplasm. The enzyme catalyses 2 reduced [nitric oxide reductase rubredoxin domain] + NAD(+) + H(+) = 2 oxidized [nitric oxide reductase rubredoxin domain] + NADH. Its pathway is nitrogen metabolism; nitric oxide reduction. One of at least two accessory proteins for anaerobic nitric oxide (NO) reductase. Reduces the rubredoxin moiety of NO reductase. This chain is Nitric oxide reductase FlRd-NAD(+) reductase, found in Escherichia coli (strain 55989 / EAEC).